The primary structure comprises 916 residues: Protein translocase subunit SecA (916 aa).

ATP is bound by residues Gln-86, 104-108, and Asp-494; that span reads GEGKT. The disordered stretch occupies residues 859–916; it reads LEAPEKPAQLQYTAPSEGGGTQTRVETRSTGRSGNPAKAAEQDAAKDAAKRPAKKKRR. The segment covering 880 to 891 has biased composition (polar residues); that stretch reads QTRVETRSTGRS. Residues 898 to 908 are compositionally biased toward basic and acidic residues; it reads AEQDAAKDAAK.

It belongs to the SecA family. As to quaternary structure, monomer and homodimer. Part of the essential Sec protein translocation apparatus which comprises SecA, SecYEG and auxiliary proteins SecDF. Other proteins may also be involved.

Its subcellular location is the cell membrane. The protein localises to the cytoplasm. The enzyme catalyses ATP + H2O + cellular proteinSide 1 = ADP + phosphate + cellular proteinSide 2.. Functionally, part of the Sec protein translocase complex. Interacts with the SecYEG preprotein conducting channel. Has a central role in coupling the hydrolysis of ATP to the transfer of proteins into and across the cell membrane, serving as an ATP-driven molecular motor driving the stepwise translocation of polypeptide chains across the membrane. This chain is Protein translocase subunit SecA, found in Pseudarthrobacter chlorophenolicus (strain ATCC 700700 / DSM 12829 / CIP 107037 / JCM 12360 / KCTC 9906 / NCIMB 13794 / A6) (Arthrobacter chlorophenolicus).